We begin with the raw amino-acid sequence, 354 residues long: Magnesium-protoporphyrin IX monomethyl ester [oxidative] cyclase 2 (354 aa).

It belongs to the AcsF family. It depends on Fe cation as a cofactor.

It catalyses the reaction Mg-protoporphyrin IX 13-monomethyl ester + 3 NADPH + 3 O2 + 2 H(+) = 3,8-divinyl protochlorophyllide a + 3 NADP(+) + 5 H2O. Its pathway is porphyrin-containing compound metabolism; chlorophyll biosynthesis (light-independent). Catalyzes the formation of the isocyclic ring in chlorophyll biosynthesis. Mediates the cyclase reaction, which results in the formation of divinylprotochlorophyllide (Pchlide) characteristic of all chlorophylls from magnesium-protoporphyrin IX 13-monomethyl ester (MgPMME). The polypeptide is Magnesium-protoporphyrin IX monomethyl ester [oxidative] cyclase 2 (Thermosynechococcus vestitus (strain NIES-2133 / IAM M-273 / BP-1)).